The sequence spans 188 residues: ATP synthase subunit b (188 aa).

A helical transmembrane segment spans residues 24 to 44 (LPASYDIVWSLVVFIIVLILF).

It belongs to the ATPase B chain family. In terms of assembly, F-type ATPases have 2 components, F(1) - the catalytic core - and F(0) - the membrane proton channel. F(1) has five subunits: alpha(3), beta(3), gamma(1), delta(1), epsilon(1). F(0) has three main subunits: a(1), b(2) and c(10-14). The alpha and beta chains form an alternating ring which encloses part of the gamma chain. F(1) is attached to F(0) by a central stalk formed by the gamma and epsilon chains, while a peripheral stalk is formed by the delta and b chains.

The protein resides in the cell membrane. In terms of biological role, f(1)F(0) ATP synthase produces ATP from ADP in the presence of a proton or sodium gradient. F-type ATPases consist of two structural domains, F(1) containing the extramembraneous catalytic core and F(0) containing the membrane proton channel, linked together by a central stalk and a peripheral stalk. During catalysis, ATP synthesis in the catalytic domain of F(1) is coupled via a rotary mechanism of the central stalk subunits to proton translocation. Functionally, component of the F(0) channel, it forms part of the peripheral stalk, linking F(1) to F(0). This chain is ATP synthase subunit b, found in Corynebacterium diphtheriae (strain ATCC 700971 / NCTC 13129 / Biotype gravis).